A 623-amino-acid polypeptide reads, in one-letter code: Protein EDS1 (623 aa).

An N-acetylalanine modification is found at Ala-2. Residue Ser-123 is the Nucleophile of the active site. Residues Asp-187 and His-317 each act as charge relay system in the active site. A coiled-coil region spans residues 358–383; that stretch reads VQAALEEEKKRVENQKKIIQVIEQER.

In terms of assembly, homodimer. Interacts with RPS4, RPS6, SNC1, SRFR1, AvrRps4 and HopA1. Part of a nuclear complex made of EDS1, PAD4 and SAG101, that can be redirected to the cytoplasm in the presence of an extranuclear form of EDS1. Interacts (via N-terminus) with PAD4 (via N-terminus). Interacts (via N-terminus) with SAG101. EDS1-SAG101 and EDS1-PAD4 form separate complexes in pathogen-unchallenged cells. Part of a nuclear protein complex made of VICTR, PAD4 and EDS1. Interacts with VICTR.

Its subcellular location is the nucleus. The protein resides in the cytoplasm. It localises to the microsome. Positive regulator of basal resistance and of effector-triggered immunity specifically mediated by TIR-NB-LRR (TNL) resistance proteins. Disruption by bacterial effector of EDS1-TIR-NB-LRR resistance protein interactions constitutes the first step in resistance activation. Acts redundantly with salicylic acid to regulate resistance gene-mediated signaling. Triggers early plant defenses and hypersensitive response independently of PAD4, and then recruits PAD4 to potentiate plant defenses through the accumulation of salicylic acid. Nuclear localization is essential for basal and TNL-conditioned immunity and for reprogramming defense gene expression, while cytoplasmic EDS1 is required to induce a complete immune response. Heterodimerization with PAD4 and/or SGA101 is necessary for TNL-mediated effector-triggered immunity. Contributes to nonhost resistance against E.amylovora. Loss of EDS1-PAD4 interaction compromises basal but not TNL-triggered resistance. Necessary for systemic acquired resistance (SAR) signal generation and perception. Has no direct lipase activity. Putative lipase activity is dispensable for immune functions. The protein is Protein EDS1 of Arabidopsis thaliana (Mouse-ear cress).